The chain runs to 602 residues: Transcription termination factor Rho (602 aa).

Disordered stretches follow at residues 1–35 and 76–216; these read MTDTDLITAGESTDGKPSDAAATDPPDLNADEPAG and ANGA…AEAE. Residues 85-96 show a composition bias toward basic and acidic residues; it reads SAQEHDKGDRPP. Residues 100–120 are compositionally biased toward polar residues; sequence APATQGEQTPTEQIDSQSQQV. Residues 172 to 182 are compositionally biased toward low complexity; the sequence is GDQQASGGQQA. Basic and acidic residues predominate over residues 183-192; that stretch reads RGDEDGEARQ. The segment covering 193–206 has biased composition (basic residues); the sequence is GRRGRRFRDRRRRG. The Rho RNA-BD domain maps to 223–301; sequence VQPVAGILDV…VRLDSINGGS (79 aa). Residues 344–349, 356–361, and Arg-387 each bind ATP; these read GKGQRA and KAGKTT.

Belongs to the Rho family. As to quaternary structure, homohexamer. The homohexamer assembles into an open ring structure.

Its function is as follows. Facilitates transcription termination by a mechanism that involves Rho binding to the nascent RNA, activation of Rho's RNA-dependent ATPase activity, and release of the mRNA from the DNA template. The chain is Transcription termination factor Rho from Mycobacterium bovis (strain ATCC BAA-935 / AF2122/97).